Reading from the N-terminus, the 136-residue chain is Type II nicking enzyme V.XorIIP (136 aa).

Belongs to the Vsr family.

Its function is as follows. May nick XorII sequences that contain T/G mispairs resulting from m5C-deamination. If unrepaired, these mismatches can lead to C-to-T transition mutations. The very short patch (VSP) repair process counteracts the mutagenic process by repairing the mismatches in favor of the G-containing strand. This enzyme is an endonuclease that nicks double-stranded DNA within the sequence CGATCG (C-methylation site unknown) next to the thymidine residue that is mismatched to 2'-deoxyguanosine. The incision is mismatch-dependent and strand-specific. This Xanthomonas oryzae pv. oryzae (strain KACC10331 / KXO85) protein is Type II nicking enzyme V.XorIIP.